Here is a 140-residue protein sequence, read N- to C-terminus: Organic hydroperoxide resistance protein-like (140 aa).

This sequence belongs to the OsmC/Ohr family.

This Staphylococcus aureus (strain MRSA252) protein is Organic hydroperoxide resistance protein-like.